The primary structure comprises 218 residues: MSAPSSAPALIPRRGMMLVLSSPSGAGKTTISRALLAEEDGLEMSVSVTTRAPRPGERDGEHYHFIDVARYMALTKDDGLLEHARVFENYYGTPRAPVEAALARGCDVLFDIDWQGTQQVAEKARTDLVSIFILPPSVGELERRLKGRAQDSDAVVAARMAKAMDEISHYFEYDYIIVNDDLDRSIADVRAILRAERLKRARRIGLAEFVNRMRGAGE.

The region spanning G15–R194 is the Guanylate kinase-like domain. S22–T29 lines the ATP pocket.

It belongs to the guanylate kinase family.

It localises to the cytoplasm. It carries out the reaction GMP + ATP = GDP + ADP. In terms of biological role, essential for recycling GMP and indirectly, cGMP. The sequence is that of Guanylate kinase from Rhodospirillum rubrum (strain ATCC 11170 / ATH 1.1.1 / DSM 467 / LMG 4362 / NCIMB 8255 / S1).